The chain runs to 292 residues: MAQPQLYLPEPFKIAYRKVGQCRRFQQLKKKNGSFKRKGIERWHRAVSTNLLKQNVLVPKEESSSDSDMGFHESQQNQKSNLKTKVKTAFGRMLSYKYRSKPACASQEGSTDHKEALLSNTQSLLPRIVKEFSSPKLFTAKMRKLSENATIQLDVVEAETEEITQGNTLLRARRTTKRLSVTSLPSGLQKGPYSPKKRPHFPALKKKKRGMENILRKSDLTVGKLQMQVDDLIETVTDKSMKLLAQRHAELQQCEFLGDEILQSSKQFQRISKRTMRKYKLKNMTTKGPGDS.

The interval 62 to 81 (ESSSDSDMGFHESQQNQKSN) is disordered.

This is an uncharacterized protein from Homo sapiens (Human).